Consider the following 497-residue polypeptide: tRNA-2-methylthio-N(6)-dimethylallyladenosine synthase (497 aa).

The segment at 1–48 is disordered; it reads MTGTSNIPTHGKEHKDAPALLPLPAPNTHHTHAAHPGDPSHDRHPSRG. Over residues 18–28 the composition is skewed to low complexity; it reads PALLPLPAPNT. Residues 48–165 enclose the MTTase N-terminal domain; the sequence is GKLFIKTHGC…LPDMIRARRE (118 aa). [4Fe-4S] cluster is bound by residues cysteine 57, cysteine 94, cysteine 128, cysteine 202, cysteine 206, and cysteine 209. Residues 188-430 form the Radical SAM core domain; that stretch reads RAEGPSAFVS…QKHINAYAAD (243 aa). Residues 433–496 enclose the TRAM domain; the sequence is KRMIGTVQTV…TNSLRGRVHT (64 aa).

Belongs to the methylthiotransferase family. MiaB subfamily. In terms of assembly, monomer. It depends on [4Fe-4S] cluster as a cofactor.

The protein localises to the cytoplasm. The catalysed reaction is N(6)-dimethylallyladenosine(37) in tRNA + (sulfur carrier)-SH + AH2 + 2 S-adenosyl-L-methionine = 2-methylsulfanyl-N(6)-dimethylallyladenosine(37) in tRNA + (sulfur carrier)-H + 5'-deoxyadenosine + L-methionine + A + S-adenosyl-L-homocysteine + 2 H(+). Catalyzes the methylthiolation of N6-(dimethylallyl)adenosine (i(6)A), leading to the formation of 2-methylthio-N6-(dimethylallyl)adenosine (ms(2)i(6)A) at position 37 in tRNAs that read codons beginning with uridine. The sequence is that of tRNA-2-methylthio-N(6)-dimethylallyladenosine synthase from Xylella fastidiosa (strain M23).